Here is a 437-residue protein sequence, read N- to C-terminus: Elongation factor 1-gamma (437 aa).

Ala2 carries the post-translational modification N-acetylalanine. Residues 2–87 form the GST N-terminal domain; that stretch reads AAGTLYTYPE…YVSNEELRGS (86 aa). Positions 88–216 constitute a GST C-terminal domain; it reads TPEAAAQVVQ…VKLCEKMAQF (129 aa). Lys147 and Lys212 each carry N6-acetyllysine. Basic and acidic residues predominate over residues 221 to 254; sequence FAETQPKKDTPRKEKGSREEKQKPQAERKEEKKA. A disordered region spans residues 221–268; sequence FAETQPKKDTPRKEKGSREEKQKPQAERKEEKKAAAPAPEEEMDECEQ. Lys253 participates in a covalent cross-link: Glycyl lysine isopeptide (Lys-Gly) (interchain with G-Cter in SUMO1). Positions 276–437 constitute an EF-1-gamma C-terminal domain; it reads AKDPFAHLPK…KAFNQGKIFK (162 aa). Lys285 is covalently cross-linked (Glycyl lysine isopeptide (Lys-Gly) (interchain with G-Cter in SUMO2)). Lys401 carries the N6-acetyllysine modification. N6-acetyllysine; alternate is present on Lys434. At Lys434 the chain carries N6-malonyllysine; alternate.

In terms of assembly, EF-1 is composed of four subunits: alpha, beta, delta, and gamma.

Its function is as follows. Probably plays a role in anchoring the complex to other cellular components. The sequence is that of Elongation factor 1-gamma (EEF1G) from Macaca fascicularis (Crab-eating macaque).